Reading from the N-terminus, the 486-residue chain is MITTEIKRVKNHINGEWVESTGTEVEAVPNPATGKIIAYVPLSPKEDVEKAVEAAKAAYETWSKVPVPNRSRQLYKYLQLLQENKEELAKIITLENGKTLTDATGEVQRGIEAVELATSAPNLMMGQALPNIASGIDGSIWRYPIGVVAGITPFNFPMMIPLWMFPLAIACGNTFVLKTSERTPLLAERLVELFYEAGFPKGVLNLVQGGKDVVNSILENKDIQAVSFVGSEPVARYVYETGTKHGKRVQALAGAKNHAIVMPDCNLEKTVQGVIGSAFASSGERCMACSVVAVVDEIADEFIDVLVAETKKLKVGDGFHEDNYVGPLIRESHKERVLGYINSGVADGATLLVDGRKIKEEVGEGYFVGATIFDGVNQEMKIWQDEIFAPVLSIVRVKDLEEGIKLTNQSKFANGAVIYTSNGKHAQTFRDNIDAGMIGVNVNVPAPMAFFAFAGNKASFFGDLGTNGTDGVQFYTRKKVVTERWF.

The NAD(+) site is built by F154, K178, E181, R182, and S231. Catalysis depends on C286, which acts as the Nucleophile. E386 is a binding site for NAD(+).

The protein belongs to the aldehyde dehydrogenase family. IolA subfamily. As to quaternary structure, homotetramer.

The catalysed reaction is 3-oxopropanoate + NAD(+) + CoA + H2O = hydrogencarbonate + acetyl-CoA + NADH + H(+). It carries out the reaction 2-methyl-3-oxopropanoate + NAD(+) + CoA + H2O = propanoyl-CoA + hydrogencarbonate + NADH + H(+). It participates in polyol metabolism; myo-inositol degradation into acetyl-CoA; acetyl-CoA from myo-inositol: step 7/7. Its function is as follows. Catalyzes the oxidation of malonate semialdehyde (MSA) and methylmalonate semialdehyde (MMSA) into acetyl-CoA and propanoyl-CoA, respectively. Is involved in a myo-inositol catabolic pathway. Bicarbonate, and not CO2, is the end-product of the enzymatic reaction. In Bacillus anthracis, this protein is Malonate-semialdehyde dehydrogenase 1.